Reading from the N-terminus, the 166-residue chain is Large ribosomal subunit protein bL19 (166 aa).

This sequence belongs to the bacterial ribosomal protein bL19 family. In terms of assembly, part of the 50S ribosomal subunit. Forms a cluster with proteins L3 and L14.

Its function is as follows. This protein is located at the 30S-50S ribosomal subunit interface and may play a role in the structure and function of the aminoacyl-tRNA binding site. Binds the 23S rRNA. This Deinococcus radiodurans (strain ATCC 13939 / DSM 20539 / JCM 16871 / CCUG 27074 / LMG 4051 / NBRC 15346 / NCIMB 9279 / VKM B-1422 / R1) protein is Large ribosomal subunit protein bL19 (rplS).